The following is a 134-amino-acid chain: Acyl carrier protein, chloroplastic (134 aa).

Residues 1–51 (MSTTFCSSVSMQATSLAATTRISFQKPGLVSRTNLSFNLRRSIPTRLSVSC) constitute a chloroplast transit peptide. Residues 55-130 (PETVEKVSKI…EAAELIEELV (76 aa)) enclose the Carrier domain. S90 is modified (O-(pantetheine 4'-phosphoryl)serine).

Belongs to the acyl carrier protein (ACP) family. 4'-phosphopantetheine is transferred from CoA to a specific serine of apo-ACP by acpS. This modification is essential for activity because fatty acids are bound in thioester linkage to the sulfhydryl of the prosthetic group. As to expression, seed.

It is found in the plastid. The protein resides in the chloroplast. Its pathway is lipid metabolism; fatty acid biosynthesis. In terms of biological role, carrier of the growing fatty acid chain in fatty acid biosynthesis. The polypeptide is Acyl carrier protein, chloroplastic (ACL1.A2) (Brassica napus (Rape)).